We begin with the raw amino-acid sequence, 245 residues long: Probable phosphatase YcdX (245 aa).

9 residues coordinate Zn(2+): His-7, His-9, His-15, His-40, Glu-73, His-101, His-131, Asp-192, and His-194.

Belongs to the PHP family. Homotrimer. Requires Zn(2+) as cofactor.

The sequence is that of Probable phosphatase YcdX from Escherichia coli O139:H28 (strain E24377A / ETEC).